The chain runs to 431 residues: MHVRSLRAAAPHSFVALWAPLFLLRSALADFSLDNEVHSSFIHRRLRSQERREMQREILSILGLPHRPRPHLQGKHNSAPMFMLDLYNAMAVEEGGGPGGQGFSYPYKAVFSTQGPPLASLQDSHFLTDADMVMSFVNLVEHDKEFFHPRYHHREFRFDLSKIPEGEAVTAAEFRIYKDYIRERFDNETFRISVYQVLQEHLGRESDLFLLDSRTLWASEEGWLVFDITATSNHWVVNPRHNLGLQLSVETLDGQSINPKLAGLIGRHGPQNKQPFMVAFFKATEVHFRSIRSTGSKQRSQNRSKTPKNQEALRMANVAENSSSDQRQACKKHELYVSFRDLGWQDWIIAPEGYAAYYCEGECAFPLNSYMNATNHAIVQTLVHFINPETVPKPCCAPTQLNAISVLYFDDSSNVILKKYRNMVVRACGCH.

The signal sequence occupies residues 1-29 (MHVRSLRAAAPHSFVALWAPLFLLRSALA). Residues 30–292 (DFSLDNEVHS…ATEVHFRSIR (263 aa)) constitute a propeptide that is removed on maturation. N187, N302, N321, and N372 each carry an N-linked (GlcNAc...) asparagine glycan. The segment at 291-311 (IRSTGSKQRSQNRSKTPKNQE) is disordered. Intrachain disulfides connect C330/C396, C359/C428, and C363/C430.

It belongs to the TGF-beta family. Homodimer; disulfide-linked. Interacts with SOSTDC1. Interacts with TWSG1. Interacts with FBN1 (via N-terminal domain) and FBN2. Interacts with type I receptor ACVR1. Interacts with type II receptor ACVR2A. Interacts with NOG; this interaction inhibits canonical BMP signaling. Interacts with SCUBE3. Interacts with ERFE; the interaction inhibits BMP-induced transcription of HAMP. Interacts with TGFBR3. Several N-termini starting at positions 293, 300, 315 and 316 have been identified by direct sequencing resulting in secretion of different mature forms. Expressed in the kidney and bladder. Lower levels seen in the brain.

The protein resides in the secreted. Its function is as follows. Growth factor of the TGF-beta superfamily that plays important role in various biological processes, including embryogenesis, hematopoiesis, neurogenesis and skeletal morphogenesis. Initiates the canonical BMP signaling cascade by associating with type I receptor ACVR1 and type II receptor ACVR2A. Once all three components are bound together in a complex at the cell surface, ACVR2A phosphorylates and activates ACVR1. In turn, ACVR1 propagates signal by phosphorylating SMAD1/5/8 that travel to the nucleus and act as activators and repressors of transcription of target genes. For specific functions such as growth cone collapse in developing spinal neurons and chemotaxis of monocytes, also uses BMPR2 as type II receptor. Can also signal through non-canonical pathways such as P38 MAP kinase signaling cascade that promotes brown adipocyte differentiation through activation of target genes, including members of the SOX family of transcription factors. Promotes the expression of HAMP, this is repressed by its interaction with ERFE. This Homo sapiens (Human) protein is Bone morphogenetic protein 7 (BMP7).